Reading from the N-terminus, the 222-residue chain is MKKLLLIATASATILSSSVSFAECIDNEWYLRADAGVAMFNKEQDKATGVKLKSNKAIPIDLGIGYYISENVRADLTLGTTIGGKLKKYGAATNTHFTGTNVSVSHKPTVTRLLINGYVDLTSFDMFDVFVGGGVGPALVKEKISGVSGLASNTKNKTNVSYKLIFGTSAQIADGVKVELAYSWINDGKTKTHNVMYKGASVQTGGMRYQSHNLTVGVRFGI.

The N-terminal stretch at Met-1–Ala-22 is a signal peptide.

Functionally, adheres to biotinylated epithelial (Vero cell) proteins. The chain is Putative adhesin RP828 from Rickettsia prowazekii (strain Madrid E).